Reading from the N-terminus, the 427-residue chain is Methylenetetrahydrofolate--tRNA-(uracil-5-)-methyltransferase TrmFO (427 aa).

6-11 serves as a coordination point for FAD; sequence GAGLAG.

It belongs to the MnmG family. TrmFO subfamily. Requires FAD as cofactor.

The protein resides in the cytoplasm. The catalysed reaction is uridine(54) in tRNA + (6R)-5,10-methylene-5,6,7,8-tetrahydrofolate + NADH + H(+) = 5-methyluridine(54) in tRNA + (6S)-5,6,7,8-tetrahydrofolate + NAD(+). The enzyme catalyses uridine(54) in tRNA + (6R)-5,10-methylene-5,6,7,8-tetrahydrofolate + NADPH + H(+) = 5-methyluridine(54) in tRNA + (6S)-5,6,7,8-tetrahydrofolate + NADP(+). Functionally, catalyzes the folate-dependent formation of 5-methyl-uridine at position 54 (M-5-U54) in all tRNAs. In Acholeplasma laidlawii (strain PG-8A), this protein is Methylenetetrahydrofolate--tRNA-(uracil-5-)-methyltransferase TrmFO.